The following is a 380-amino-acid chain: MAPNLRKSHPLLKMINNSLIDLPTPSNISVWWNFGSLLGICLTTQILTGLLLAAHYTADTTLAFSSVAHTCRNVQHGWLIRNLHANGASFFFICIYMHIGRGLYYGSYLYKETWNTGVILLLTLMATAFVGYVLPWGQMSFWGATVITNLFSAIPYIGQTIVEWAWGGFSVDNPTLTRFFTLHFLLPFMIMGLTLIHLTFLHESGSNNPLGIVSNCDKIPFHPYFSLKDTLGFMLMFLPLMTLALFSPNLLGDPENFTPANPLVTPPHIKPEWYFLFAYGFLRSIPNKLGGVLALAASMLILFLAPLLHKSKQRTMTFRPLSQLLFWTLTANLLILTWVGSQPVEHPFIIIGQLASLTYFTILLILFPMTGALENKMLNY.

Helical transmembrane passes span 34–54, 78–99, 114–134, and 179–199; these read FGSL…LLAA, WLIR…YMHI, WNTG…GYVL, and FFTL…IHLT. Heme b is bound by residues H84 and H98. Positions 183 and 197 each coordinate heme b. H202 provides a ligand contact to a ubiquinone. 4 helical membrane-spanning segments follow: residues 227 to 247, 289 to 309, 321 to 341, and 348 to 368; these read LKDT…ALFS, LGGV…PLLH, LSQL…WVGS, and FIII…ILFP.

It belongs to the cytochrome b family. As to quaternary structure, the cytochrome bc1 complex contains 11 subunits: 3 respiratory subunits (MT-CYB, CYC1 and UQCRFS1), 2 core proteins (UQCRC1 and UQCRC2) and 6 low-molecular weight proteins (UQCRH/QCR6, UQCRB/QCR7, UQCRQ/QCR8, UQCR10/QCR9, UQCR11/QCR10 and a cleavage product of UQCRFS1). This cytochrome bc1 complex then forms a dimer. Requires heme b as cofactor.

Its subcellular location is the mitochondrion inner membrane. Functionally, component of the ubiquinol-cytochrome c reductase complex (complex III or cytochrome b-c1 complex) that is part of the mitochondrial respiratory chain. The b-c1 complex mediates electron transfer from ubiquinol to cytochrome c. Contributes to the generation of a proton gradient across the mitochondrial membrane that is then used for ATP synthesis. The chain is Cytochrome b (MT-CYB) from Balearica regulorum (Grey crowned-crane).